The chain runs to 304 residues: Undecaprenyl-diphosphatase (304 aa).

Helical transmembrane passes span 5-25, 47-67, 72-92, 111-131, 137-157, 209-231, 248-268, and 282-302; these read FLFILKALIIAIVEGLTEFVP, GFPEMYEVVIQLGAILAVVVL, ISSSVVEFLSYIFSFIGLKAS, FGINVIIGTIPAAILGLLFHD, LFSTKTVAIGFIVGGILLIVI, ISGLSTTVATEFTFFLAIPAMVG, TNLISLILGFIVAFIVSLVVI, and IFAIYRVFAGIVLAILIFTKV.

This sequence belongs to the UppP family.

It is found in the cell membrane. The catalysed reaction is di-trans,octa-cis-undecaprenyl diphosphate + H2O = di-trans,octa-cis-undecaprenyl phosphate + phosphate + H(+). Catalyzes the dephosphorylation of undecaprenyl diphosphate (UPP). Confers resistance to bacitracin. The chain is Undecaprenyl-diphosphatase from Clostridium perfringens (strain SM101 / Type A).